The following is a 396-amino-acid chain: Mannonate dehydratase (396 aa).

Belongs to the mannonate dehydratase family. Requires Fe(2+) as cofactor. It depends on Mn(2+) as a cofactor.

It catalyses the reaction D-mannonate = 2-dehydro-3-deoxy-D-gluconate + H2O. It participates in carbohydrate metabolism; pentose and glucuronate interconversion. Catalyzes the dehydration of D-mannonate. This Yersinia enterocolitica serotype O:8 / biotype 1B (strain NCTC 13174 / 8081) protein is Mannonate dehydratase.